The primary structure comprises 136 residues: Small cardioactive peptides (136 aa).

The signal sequence occupies residues 1-24 (METSVSRVTVSLTLLVLIICSADA). Methionine amide is present on residues Met-33 and Met-46. Positions 49 to 135 (SQMKTETGTD…VLSKLKSLLQ (87 aa)) are cleaved as a propeptide — carboxy-terminal peptide.

Belongs to the SCP family. Post-translationally, contains three disulfide bonds. In terms of tissue distribution, highly expressed in the buccal ganglion.

The protein resides in the secreted. Involved in the stimulation of contractile activity in the gut, the increase of the amplitude of the heart beat, and enhancement of the contractile response of the radula closer muscle. This is Small cardioactive peptides from Aplysia californica (California sea hare).